Consider the following 145-residue polypeptide: Transcription antitermination protein NusB (145 aa).

This sequence belongs to the NusB family.

Involved in transcription antitermination. Required for transcription of ribosomal RNA (rRNA) genes. Binds specifically to the boxA antiterminator sequence of the ribosomal RNA (rrn) operons. The protein is Transcription antitermination protein NusB of Burkholderia vietnamiensis (strain G4 / LMG 22486) (Burkholderia cepacia (strain R1808)).